The chain runs to 408 residues: UDP-N-acetylglucosamine--dolichyl-phosphate N-acetylglucosaminephosphotransferase (408 aa).

The Lumenal portion of the chain corresponds to 1–10; sequence MWAFPELPMP. A helical membrane pass occupies residues 11 to 38; sequence LLVNLIGSLMGFVATVTLIPAFRGHFIA. Residues 39–58 are Cytoplasmic-facing; that stretch reads ARLCGQDLNKSSREQIPESQ. Residues 44 to 46 and E56 each bind UDP-N-acetyl-alpha-D-glucosamine; that span reads QDL. A helical transmembrane segment spans residues 59-78; it reads GVISGAVFLIILFCFIPFPF. The Lumenal segment spans residues 79–91; that stretch reads LNCFVEQQCKAFP. A helical transmembrane segment spans residues 92–118; that stretch reads HHEFVALIGALLAICCMIFLGFADDVL. At 119-121 the chain is on the cytoplasmic side; that stretch reads NLR. A helical transmembrane segment spans residues 122–143; that stretch reads WRHKLLLPTAASLPLLMVYFTN. Residue K125 coordinates dolichyl phosphate. The Lumenal segment spans residues 144–166; the sequence is FGNTTIVVPKPLRPILGLHLDLG. A glycan (N-linked (GlcNAc...) asparagine) is linked at N146. The helical transmembrane segment at 167–186 threads the bilayer; that stretch reads ILYYVYMGLLAVFCTNAINI. A dolichyl phosphate-binding site is contributed by 178–186; the sequence is VFCTNAINI. N185 contributes to the Mg(2+) binding site. Residues 187 to 192 are Cytoplasmic-facing; the sequence is LAGING. N191 is a binding site for UDP-N-acetyl-alpha-D-glucosamine. Residues 193–213 traverse the membrane as a helical segment; that stretch reads LEAGQSLVISASIIVFNLVEL. At 214-218 the chain is on the lumenal side; that stretch reads DGDYR. The chain crosses the membrane as a helical span at residues 219–242; the sequence is DDHIFSLYFMIPFFFTTLGLLYHN. Topologically, residues 243–250 are cytoplasmic; sequence WYPSRVFV. The chain crosses the membrane as a helical span at residues 251 to 269; sequence GDTFCYFAGMTFAVVGILG. D252 is a Mg(2+) binding site. At 270-271 the chain is on the lumenal side; sequence HF. The helical transmembrane segment at 272 to 293 threads the bilayer; the sequence is SKTMLLFFMPQVFNFLYSLPQL. Residues 294–375 lie on the Cytoplasmic side of the membrane; sequence LHIIPCPRHR…LLLKVFGPMH (82 aa). Residue 301-303 participates in UDP-N-acetyl-alpha-D-glucosamine binding; sequence RHR. The chain crosses the membrane as a helical span at residues 376–400; the sequence is ERNLTLLLLLLQVVGSAVTFSIRYQ. Residues 401–408 are Lumenal-facing; sequence LVRLFYDV.

The protein belongs to the glycosyltransferase 4 family. In terms of assembly, homodimer. Mg(2+) is required as a cofactor.

It localises to the endoplasmic reticulum membrane. It carries out the reaction a di-trans,poly-cis-dolichyl phosphate + UDP-N-acetyl-alpha-D-glucosamine = an N-acetyl-alpha-D-glucosaminyl-diphospho-di-trans,poly-cis-dolichol + UMP. Its pathway is protein modification; protein glycosylation. Inhibited by natural nucleoside antibiotic tunicamycin, which acts as a structural analog and competitor of UDP-GlcNAc. Activated by Man-P-Dol. Activated by manganese. Inhibited by diumycin. Its function is as follows. UDP-N-acetylglucosamine--dolichyl-phosphate N-acetylglucosaminephosphotransferase that operates in the biosynthetic pathway of dolichol-linked oligosaccharides, the glycan precursors employed in protein asparagine (N)-glycosylation. The assembly of dolichol-linked oligosaccharides begins on the cytosolic side of the endoplasmic reticulum membrane and finishes in its lumen. The sequential addition of sugars to dolichol pyrophosphate produces dolichol-linked oligosaccharides containing fourteen sugars, including two GlcNAcs, nine mannoses and three glucoses. Once assembled, the oligosaccharide is transferred from the lipid to nascent proteins by oligosaccharyltransferases. Catalyzes the initial step of dolichol-linked oligosaccharide biosynthesis, transfering GlcNAc-1-P from cytosolic UDP-GlcNAc onto the carrier lipid dolichyl phosphate (P-dolichol), yielding GlcNAc-P-P-dolichol embedded in the cytoplasmic leaflet of the endoplasmic reticulum membrane. The sequence is that of UDP-N-acetylglucosamine--dolichyl-phosphate N-acetylglucosaminephosphotransferase from Bos taurus (Bovine).